We begin with the raw amino-acid sequence, 761 residues long: Zinc finger protein 287 (761 aa).

An SCAN box domain is found at 49–131; it reads RQNFRNFPYP…TLVEDLTQIL (83 aa). Residues 134–154 form a disordered region; the sequence is EAPQNSTLSQDTPEEDPRGKH. Positions 170 to 238 constitute a KRAB domain; it reads MTFKDVAVDI…IKEILEGPSP (69 aa). 14 C2H2-type zinc fingers span residues 368–390, 396–418, 424–446, 452–474, 480–502, 508–530, 536–558, 564–586, 592–614, 620–642, 648–670, 676–698, 704–726, and 732–754; these read YKCN…QSTH, YECE…QRMH, YECH…QRIH, YKCD…QRTH, YKCL…QRVH, YICN…QKIH, YKCN…QRIH, YKCN…QTTH, YICN…HRTH, YKCS…QRIH, FKCN…QRIH, YKCN…QRTH, and YACR…QRVH.

This sequence belongs to the krueppel C2H2-type zinc-finger protein family.

Its subcellular location is the nucleus. May be involved in transcriptional regulation. In Pongo pygmaeus (Bornean orangutan), this protein is Zinc finger protein 287.